Here is a 1231-residue protein sequence, read N- to C-terminus: MIAAPEIPTDFNLLQESETHFSSDTDFEDIEGKNQKQGKGKTCKKGKKGPAEKGKGGNGGGKPPSGPNRMNGHHQQNGVENMMLFEVVKMGKSAMQSVVDDWIESYKHDRDIALLDLINFFIQCSGCKGVVTAEMFRHMQNSEIIRKMTEEFDEDSGDYPLTMAGPQWKKFKSSFCEFIGVLVRQCQYSIIYDEYMMDTVISLLTGLSDSQVRAFRHTSTLAAMKLMTALVNVALNLSINMDNTQRQYEAERNKMIGKRANERLELLLQKRKELQENQDEIENMMNAIFKGVFVHRYRDAIAEIRAICIEEIGIWMKMYSDAFLNDSYLKYVGWTMHDKQGEVRLKCLTALQGLYYNKELNSKLELFTSRFKDRIVSMTLDKEYDVAVQAIKLLTLVLQSSEEVLTAEDCENVYHLVYSAHRPVAVAAGEFLYKKLFSRRDPEEDGMMKRRGRQGPNANLVKTLVFFFLESELHEHAAYLVDSMWDCATELLKDWECMNSLLLEEPLSGEEALTDRQESALIEIMLCTIRQAAECHPPVGRGTGKRVLTAKEKKTQLDDRTKITELFAVALPQLLAKYSVDAEKVTNLLQLPQYFDLEIYTTGRLEKHLDALLRQIRNIVEKHTDTDVLEACSKTYHALCNEEFTIFNRVDISRSQLIDELADKFNRLLEDFLQEGEEPDEDDAYQVLSTLKRITAFHNAHDLSKWDLFACNYKLLKTGIENGDMPEQIVIHALQCTHYVILWQLAKITESSSTKEDLLRLKKQMRVFCQICQHYLTNVNTTVKEQAFTILCDILMIFSHQIMSGGRDMLEPLVYTPDSSLQSELLSFILDHVFIEQDDDNNSADGQQEDEASKIEALHKRRNLLAAFCKLIVYTVVEMNTAADIFKQYMKYYNDYGDIIKETMSKTRQIDKIQCAKTLILSLQQLFNEMIQENGYNFDRSSSTFSGIKELARRFALTFGLDQLKTREAIAMLHKDGIEFAFKEPNPQGESHPPLNLAFLDILSEFSSKLLRQDKRTVYVYLEKFMTFQMSLRREDVWLPLMSYRNSLLAGGDDDTMSVISGISSRGSTVRSKKSKPSTGKRKVVEGMQLSLTEESSSSDSMWLSREQTLHTPVMMQTPQLTSTIMREPKRLRPEDSFMSVYPMQTEHHQTPLDYNRRGTSLMEDDEEPIVEDVMMSSEGRIEDLNEGMDFDTMDIDLPPSKNRRERTELKPDFFDPASIMDESVLGVSMF.

N-acetylmethionine is present on methionine 1. A disordered region spans residues 1 to 75 (MIAAPEIPTD…GPNRMNGHHQ (75 aa)). The segment covering 36 to 48 (KQGKGKTCKKGKK) has biased composition (basic residues). The 86-residue stretch at 293 to 378 (FVHRYRDAIA…SRFKDRIVSM (86 aa)) folds into the SCD domain. Residue lysine 607 is modified to N6-acetyllysine. Phosphoserine is present on residues serine 1058, serine 1061, serine 1064, and serine 1065. The disordered stretch occupies residues 1064–1083 (SSRGSTVRSKKSKPSTGKRK). Positions 1071 to 1082 (RSKKSKPSTGKR) are enriched in basic residues. A Phosphothreonine modification is found at threonine 1112. Phosphoserine is present on residues serine 1177 and serine 1178.

It belongs to the SCC3 family. As to quaternary structure, interacts directly with RAD21 in cohesin complex. Cohesin complexes are composed of a heterodimer between a SMC1 protein (SMC1A or SMC1B) and SMC3, which are attached via their hinge domain, and RAD21 which link them at their heads, and one STAG protein (STAG1, STAG2 or STAG3). In cohesin complexes, STAG2 is mutually exclusive with STAG1 and STAG3. Post-translationally, phosphorylated by PLK1. The large dissociation of cohesin from chromosome arms during prophase is partly due to its phosphorylation.

The protein localises to the nucleus. Its subcellular location is the chromosome. The protein resides in the centromere. Functionally, component of cohesin complex, a complex required for the cohesion of sister chromatids after DNA replication. The cohesin complex apparently forms a large proteinaceous ring within which sister chromatids can be trapped. At anaphase, the complex is cleaved and dissociates from chromatin, allowing sister chromatids to segregate. The cohesin complex may also play a role in spindle pole assembly during mitosis. The protein is Cohesin subunit SA-2 (STAG2) of Homo sapiens (Human).